The sequence spans 143 residues: Mannitol-specific phosphotransferase enzyme IIA component (143 aa).

Residues 1–142 (MKLLKNNIYI…DKVLEFLAKH (142 aa)) enclose the PTS EIIA type-2 domain. Catalysis depends on histidine 61, which acts as the Tele-phosphohistidine intermediate. A Phosphohistidine; by HPr modification is found at histidine 61.

The protein resides in the cytoplasm. Its function is as follows. The phosphoenolpyruvate-dependent sugar phosphotransferase system (sugar PTS), a major carbohydrate active transport system, catalyzes the phosphorylation of incoming sugar substrates concomitantly with their translocation across the cell membrane. The enzyme II CmtAB PTS system is involved in D-mannitol transport. This chain is Mannitol-specific phosphotransferase enzyme IIA component (mtlF), found in Mycoplasma pneumoniae (strain ATCC 29342 / M129 / Subtype 1) (Mycoplasmoides pneumoniae).